A 177-amino-acid chain; its full sequence is NADH-quinone oxidoreductase subunit E (177 aa).

[2Fe-2S] cluster is bound by residues Cys93, Cys98, Cys134, and Cys138.

It belongs to the complex I 24 kDa subunit family. [2Fe-2S] cluster serves as cofactor.

The catalysed reaction is a quinone + NADH + 5 H(+)(in) = a quinol + NAD(+) + 4 H(+)(out). Its function is as follows. NDH-1 shuttles electrons from NADH, via FMN and iron-sulfur (Fe-S) centers, to quinones in the respiratory chain. Couples the redox reaction to proton translocation (for every two electrons transferred, four hydrogen ions are translocated across the cytoplasmic membrane), and thus conserves the redox energy in a proton gradient. This Rickettsia prowazekii (strain Madrid E) protein is NADH-quinone oxidoreductase subunit E (nuoE).